The sequence spans 359 residues: MWQCKNKSRWWYSLVPILCICIMCYGAIAYSYSFCYVEVWTHLGMKAAAIGMTCLHLIIVILLWIIWAQIIMMGPGRQPRVAPFMILPEMADAGERAKEGAATSVLPPDVYQCDTQGYPVWCSVCQSLKGLRTHHSVHLGFCVPRLDHYCVWLGTVIGRRNYRLFNQFLMCFLMHALIIFVSVVSLQRRIASSARMRGEREDPNVLVVLSLSCLVLLMVGALFISFLNYMANNQTTIEKLYTPKRQPRTMCFCVYNPADQYRYVVKSLPHENWNMWDKGSAYANYKDFLGSSIWRWFIPIGSNIPEFQTSAWEDDYNAILGPYKEELGSHYRDILMQRIEQGKYVTRLRVYGDKFREGL.

4 helical membrane-spanning segments follow: residues 10 to 30, 47 to 67, 164 to 184, and 206 to 226; these read WWYS…AIAY, AAAI…WIIW, LFNQ…VSVV, and LVVL…FISF. A DHHC domain is found at 120-170; sequence VWCSVCQSLKGLRTHHSVHLGFCVPRLDHYCVWLGTVIGRRNYRLFNQFLM.

The protein belongs to the DHHC palmitoyltransferase family. PFA5 subfamily. Post-translationally, autopalmitoylated.

The protein resides in the membrane. It catalyses the reaction L-cysteinyl-[protein] + hexadecanoyl-CoA = S-hexadecanoyl-L-cysteinyl-[protein] + CoA. The protein is Palmitoyltransferase PFA5 (PFA5) of Eremothecium gossypii (strain ATCC 10895 / CBS 109.51 / FGSC 9923 / NRRL Y-1056) (Yeast).